The sequence spans 236 residues: Terpene cyclase andB (236 aa).

7 consecutive transmembrane segments (helical) span residues 13–33 (TVVN…YILM), 45–65 (MSML…ILCP), 70–90 (VVRP…YAAI), 106–126 (HLPL…IALI), 135–155 (FLWS…FQLL), 166–186 (VLWL…TLMW), and 200–220 (LTAY…VVFY).

The protein belongs to the paxB family.

It localises to the membrane. Its pathway is secondary metabolite biosynthesis; terpenoid biosynthesis. In terms of biological role, terpene cyclase; part of the gene cluster that mediates the biosynthesis of anditomin, a fungal meroterpenoid. The first step of the pathway is the synthesis of 3,5-dimethylorsellinic acid (DMOA) by the polyketide synthase andM. DMOA is then converted to the phthalide compound 5,7-dihydroxy-4,6-dimethylphthalide (DHDMP) by the cytochrome P450 monooxygenase andK, which is further prenylated by the prenyltransferase andD to yield farnesyl-DHDMP. Further epoxidation by the FAD-dependent monooxygenase andE leads to epoxyfarnesyl-DHDMP. The next step involves the terpene cyclase andB that converts epoxyfarnesyl-DHDMP into preandiloid A through opening of the epoxide ring followed by the cyclization of the farnesyl moiety. Preandiloid A is in turn oxidized at the C-3 hydroxyl group to yield preandiloid B by the dehydrogenase andC. The dioxygenase andA is solely responsible for the dehydrogenation of preandiloid B leading to the enone preandiloid C, as well as for the intriguing structural rearrangement to generate the bicyclo[2.2.2]octane core, transforming preandiloid C into andiconin. FAD-binding monooxygenase andJ then produces andilesin D which is reduced by dehydrogenase andI to yield andilesin A. Action of acetyltransferase andG followed by a spontaneous acetate elimination leads then to andilesin B, which is in turn substrate of the short chain dehydrogenase andH to yield andilesin C. Finally, the dioxygenase andF catalyzes the transformation of andilesin C to anditomin. The sequence is that of Terpene cyclase andB from Emericella variicolor (Aspergillus stellatus).